The chain runs to 370 residues: Protein-tyrosine sulfotransferase 1 (370 aa).

At 1–8 the chain is on the cytoplasmic side; that stretch reads MVGKLKQN. The helical; Signal-anchor for type II membrane protein transmembrane segment at 9-25 threads the bilayer; the sequence is LLLACLVISSVTVFYLG. The Lumenal segment spans residues 26-370; sequence QHAMECHHRI…KEKPQTEQVE (345 aa). Asn60 carries N-linked (GlcNAc...) asparagine glycosylation. 79 to 83 contributes to the 3'-phosphoadenylyl sulfate binding site; it reads RSGTT. An intrachain disulfide couples Cys97 to Cys157. The Proton donor/acceptor role is filled by Glu100. The interval 102 to 106 is interaction with peptide substrate; that stretch reads RVIPR. 3'-phosphoadenylyl sulfate-binding residues include Arg184, Ser192, and Arg196. Cys226 and Cys234 are disulfide-bonded. 3'-phosphoadenylyl sulfate is bound at residue Tyr239. N-linked (GlcNAc...) asparagine glycosylation occurs at Asn262. 3'-phosphoadenylyl sulfate is bound by residues 286 to 295 and Lys301; that span reads STDQVIKPVN.

The protein belongs to the protein sulfotransferase family. In terms of assembly, homodimer. Can also form heterodimers with TPST2. Post-translationally, N-glycosylated.

The protein localises to the golgi apparatus membrane. The catalysed reaction is L-tyrosyl-[protein] + 3'-phosphoadenylyl sulfate = O-sulfo-L-tyrosine-[protein] + adenosine 3',5'-bisphosphate + H(+). In terms of biological role, catalyzes the O-sulfation of tyrosine residues within acidic motifs of polypeptides, using 3'-phosphoadenylyl sulfate (PAPS) as cosubstrate. The chain is Protein-tyrosine sulfotransferase 1 (Tpst1) from Rattus norvegicus (Rat).